Here is a 160-residue protein sequence, read N- to C-terminus: SsrA-binding protein (160 aa).

The segment at 131 to 160 (KKEFDKRHTEKERDSDREIQRAMRTKGKDD) is disordered.

This sequence belongs to the SmpB family.

It localises to the cytoplasm. Functionally, required for rescue of stalled ribosomes mediated by trans-translation. Binds to transfer-messenger RNA (tmRNA), required for stable association of tmRNA with ribosomes. tmRNA and SmpB together mimic tRNA shape, replacing the anticodon stem-loop with SmpB. tmRNA is encoded by the ssrA gene; the 2 termini fold to resemble tRNA(Ala) and it encodes a 'tag peptide', a short internal open reading frame. During trans-translation Ala-aminoacylated tmRNA acts like a tRNA, entering the A-site of stalled ribosomes, displacing the stalled mRNA. The ribosome then switches to translate the ORF on the tmRNA; the nascent peptide is terminated with the 'tag peptide' encoded by the tmRNA and targeted for degradation. The ribosome is freed to recommence translation, which seems to be the essential function of trans-translation. The polypeptide is SsrA-binding protein (Stutzerimonas stutzeri (strain A1501) (Pseudomonas stutzeri)).